Consider the following 549-residue polypeptide: Oxygen-dependent choline dehydrogenase (549 aa).

Position 4–33 (4–33) interacts with FAD; the sequence is DFVIIGSGSAGSALAYRLSEDGRNSVIVLE. H465 functions as the Proton acceptor in the catalytic mechanism.

This sequence belongs to the GMC oxidoreductase family. It depends on FAD as a cofactor.

It localises to the cell membrane. The enzyme catalyses choline + A = betaine aldehyde + AH2. It catalyses the reaction betaine aldehyde + NAD(+) + H2O = glycine betaine + NADH + 2 H(+). Its pathway is amine and polyamine biosynthesis; betaine biosynthesis via choline pathway; betaine aldehyde from choline (cytochrome c reductase route): step 1/1. Its function is as follows. Involved in the biosynthesis of the osmoprotectant glycine betaine. Catalyzes the oxidation of choline to betaine aldehyde and betaine aldehyde to glycine betaine at the same rate. This Rhizobium meliloti (strain 1021) (Ensifer meliloti) protein is Oxygen-dependent choline dehydrogenase.